A 510-amino-acid chain; its full sequence is Bifunctional purine biosynthesis protein PurH (510 aa).

One can recognise an MGS-like domain in the interval 1-144 (MSKRALISVT…KNYKDVIVVV (144 aa)).

The protein belongs to the PurH family.

It catalyses the reaction (6R)-10-formyltetrahydrofolate + 5-amino-1-(5-phospho-beta-D-ribosyl)imidazole-4-carboxamide = 5-formamido-1-(5-phospho-D-ribosyl)imidazole-4-carboxamide + (6S)-5,6,7,8-tetrahydrofolate. The enzyme catalyses IMP + H2O = 5-formamido-1-(5-phospho-D-ribosyl)imidazole-4-carboxamide. It functions in the pathway purine metabolism; IMP biosynthesis via de novo pathway; 5-formamido-1-(5-phospho-D-ribosyl)imidazole-4-carboxamide from 5-amino-1-(5-phospho-D-ribosyl)imidazole-4-carboxamide (10-formyl THF route): step 1/1. It participates in purine metabolism; IMP biosynthesis via de novo pathway; IMP from 5-formamido-1-(5-phospho-D-ribosyl)imidazole-4-carboxamide: step 1/1. In Clostridioides difficile (strain 630) (Peptoclostridium difficile), this protein is Bifunctional purine biosynthesis protein PurH.